Consider the following 320-residue polypeptide: Phosphate acetyltransferase (320 aa).

The protein belongs to the phosphate acetyltransferase and butyryltransferase family.

It localises to the cytoplasm. The catalysed reaction is acetyl-CoA + phosphate = acetyl phosphate + CoA. It participates in metabolic intermediate biosynthesis; acetyl-CoA biosynthesis; acetyl-CoA from acetate: step 2/2. This is Phosphate acetyltransferase (pta) from Mycoplasma genitalium (strain ATCC 33530 / DSM 19775 / NCTC 10195 / G37) (Mycoplasmoides genitalium).